A 303-amino-acid polypeptide reads, in one-letter code: E3 ubiquitin-protein ligase CHIP (303 aa).

The span at 1-10 shows a compositional bias: basic and acidic residues; that stretch reads MKGKEEKEGG. The disordered stretch occupies residues 1–30; it reads MKGKEEKEGGARLGAGGGSPEKSPSAQELK. Lys-2 participates in a covalent cross-link: Glycyl lysine isopeptide (Lys-Gly) (interchain with G-Cter in ubiquitin). Phosphoserine is present on Ser-19. A Glycyl lysine isopeptide (Lys-Gly) (interchain with G-Cter in ubiquitin) cross-link involves residue Lys-22. Phosphoserine is present on residues Ser-23 and Ser-25. TPR repeat units lie at residues 26–59, 60–93, and 95–127; these read AQEL…NPLV, AVYY…DGQS, and KAHF…AKEQ. Positions 101 to 200 are required for interaction with MAPK7; the sequence is GQCQLEMESY…SHVRAQQACI (100 aa). Residues 142-196 form a required for interaction with and ubiquitination of MYOCD region; that stretch reads AKKKRWNSIEERRIHQESELHSYLSRLIAAERERELEECQRNHEGDEDDSHVRAQ. The required for interaction with FOXO1 stretch occupies residues 143 to 197; it reads KKKRWNSIEERRIHQESELHSYLSRLIAAERERELEECQRNHEGDEDDSHVRAQQ. Positions 143-303 are required for ubiquitination of FOXO1; sequence KKKRWNSIEE…ISENGWVEDY (161 aa). Residue Ser-149 is modified to Phosphoserine. Residues Lys-221 and Lys-255 each participate in a glycyl lysine isopeptide (Lys-Gly) (interchain with G-Cter in ubiquitin) cross-link. Residues 226–300 enclose the U-box domain; the sequence is DIPDYLCGKI…DAFISENGWV (75 aa). Residue Ser-273 is modified to Phosphoserine.

Homodimer. Interacts with BAG2. Interacts with E2 ubiquitin conjugating enzymes UBE2D1, UBE2D2 and UBE2D3. Detected in a ternary complex containing STUB1, HSPA1A and HSPBP1. Part of a complex composed of STUB1/CHIP, VCP/p97, CHRNA3, and UBXN2A that modulates the ubiquitination and endoplasmic reticulum-associated degradation (ERAD) of CHRNA3. Within the complex UBXN2A acts as a scaffold protein required for the interaction of CHRNA3 with VCP/p97, this interaction also inhibits CHRNA3 ubiquitination by STUB1/CHIP and subsequently ERAD. Interacts with MKKS. Interacts with DNAAF4. Interacts (when monoubiquitinated) with ATXN3. Interacts with UBE2W. Interacts (via the U-box domain) with the UBE2V2-UBE2N heterodimer; the complex has a specific 'Lys-63'-linked polyubiquitination activity. Interacts with DNAJB6. Interacts with FLCN. Interacts with HSP90AA1. Interacts with HSP90. Interacts with UBE2N and UBE2V1. Interacts (via TPR repeats) with HSPA8 (via C-terminus). Interacts (via TPR repeats) with HSPA1A (via C-terminus). Interacts with the non-acetylated form of HSPA1A and HSPA1B. Interacts with SMAD3 and HSP90AB1. Interacts with UBE4B. Interacts with PRMT5. Interacts with MYOCD (via C-terminus). Interacts with FOXO1 (when phosphorylated on 'Ser-256'). Interacts with MAPK7/ERK5; the interaction is enhanced in the presence of IGF1 or MAP2K5 and promotes STUB1/CHIP E3 ligase activity. Interacts with and ubiquitinates ESR1; the interaction is promoted in the absence of estradiol (17-beta-estradiol/E2). Interacts with ESR2. Interacts with and ubiquitinates NFATC3; HSPA1A/HSP70 is required as a co-chaperone. In macrophages, interacts with PAQR3; the interaction promotes PPARG poylubiquitination and STUB1-mediated degradation. Component of the chaperone-assisted selective autophagy (CASA) complex consisting of BAG3, HSPA8/HSC70, HSPB8 and STUB1/CHIP. Post-translationally, monoubiquitinated at Lys-2 following cell stress by UBE2W, promoting the interaction with ATXN3. Auto-ubiquitinated; mediated by UBE2D1 and UBE2D2 and enhanced in the presence of MAP2K5. Expressed in differentiated myotubes (at protein level). Highly expressed in skeletal muscle, heart, pancreas, brain and placenta. Detected in kidney, liver and lung.

It localises to the cytoplasm. The protein localises to the nucleus. It is found in the mitochondrion. The enzyme catalyses S-ubiquitinyl-[E2 ubiquitin-conjugating enzyme]-L-cysteine + [acceptor protein]-L-lysine = [E2 ubiquitin-conjugating enzyme]-L-cysteine + N(6)-ubiquitinyl-[acceptor protein]-L-lysine.. Its pathway is protein modification; protein ubiquitination. Functionally, E3 ubiquitin-protein ligase which targets misfolded chaperone substrates towards proteasomal degradation. Plays a role in the maintenance of mitochondrial morphology and promotes mitophagic removal of dysfunctional mitochondria; thereby acts as a protector against apoptosis in response to cellular stress. Negatively regulates vascular smooth muscle contraction, via degradation of the transcriptional activator MYOCD and subsequent loss of transcription of genes involved in vascular smooth muscle contraction. Promotes survival and proliferation of cardiac smooth muscle cells via ubiquitination and degradation of FOXO1, resulting in subsequent repression of FOXO1-mediated transcription of pro-apoptotic genes. Ubiquitinates ICER-type isoforms of CREM and targets them for proteasomal degradation, thereby acts as a positive effector of MAPK/ERK-mediated inhibition of apoptosis in cardiomyocytes. Inhibits lipopolysaccharide-induced apoptosis and hypertrophy in cardiomyocytes, via ubiquitination and subsequent proteasomal degradation of NFATC3. Collaborates with ATXN3 in the degradation of misfolded chaperone substrates: ATXN3 restricting the length of ubiquitin chain attached to STUB1/CHIP substrates and preventing further chain extension. Ubiquitinates NOS1 in concert with Hsp70 and Hsp40. Modulates the activity of several chaperone complexes, including Hsp70, Hsc70 and Hsp90. Ubiquitinates CHRNA3 targeting it for endoplasmic reticulum-associated degradation in cortical neurons, as part of the STUB1-VCP-UBXN2A complex. Ubiquitinates and promotes ESR1 proteasomal degradation in response to age-related circulating estradiol (17-beta-estradiol/E2) decline, thereby promotes neuronal apoptosis in response to ischemic reperfusion injury. Mediates transfer of non-canonical short ubiquitin chains to HSPA8 that have no effect on HSPA8 degradation. Mediates polyubiquitination of DNA polymerase beta (POLB) at 'Lys-41', 'Lys-61' and 'Lys-81', thereby playing a role in base-excision repair: catalyzes polyubiquitination by amplifying the HUWE1/ARF-BP1-dependent monoubiquitination and leading to POLB-degradation by the proteasome. Mediates polyubiquitination of CYP3A4. Ubiquitinates EPHA2 and may regulate the receptor stability and activity through proteasomal degradation. Acts as a co-chaperone for HSPA1A and HSPA1B chaperone proteins and promotes ubiquitin-mediated protein degradation. Negatively regulates the suppressive function of regulatory T-cells (Treg) during inflammation by mediating the ubiquitination and degradation of FOXP3 in a HSPA1A/B-dependent manner. Catalyzes monoubiquitination of SIRT6, preventing its degradation by the proteasome. Likely mediates polyubiquitination and down-regulates plasma membrane expression of PD-L1/CD274, an immune inhibitory ligand critical for immune tolerance to self and antitumor immunity. Negatively regulates TGF-beta signaling by modulating the basal level of SMAD3 via ubiquitin-mediated degradation. Plays a role in the degradation of TP53. Mediates ubiquitination of RIPK3 leading to its subsequent proteasome-dependent degradation. May regulate myosin assembly in striated muscles together with UBE4B and VCP/p97 by targeting myosin chaperone UNC45B for proteasomal degradation. Ubiquitinates PPARG in macrophages playing a role in M2 macrophages polarization and angiogenesis. The chain is E3 ubiquitin-protein ligase CHIP from Homo sapiens (Human).